Consider the following 432-residue polypeptide: Gamma-glutamyl phosphate reductase (432 aa).

It belongs to the gamma-glutamyl phosphate reductase family.

Its subcellular location is the cytoplasm. The catalysed reaction is L-glutamate 5-semialdehyde + phosphate + NADP(+) = L-glutamyl 5-phosphate + NADPH + H(+). The protein operates within amino-acid biosynthesis; L-proline biosynthesis; L-glutamate 5-semialdehyde from L-glutamate: step 2/2. Its function is as follows. Catalyzes the NADPH-dependent reduction of L-glutamate 5-phosphate into L-glutamate 5-semialdehyde and phosphate. The product spontaneously undergoes cyclization to form 1-pyrroline-5-carboxylate. This chain is Gamma-glutamyl phosphate reductase, found in Methylorubrum extorquens (strain PA1) (Methylobacterium extorquens).